The chain runs to 158 residues: MMQKLLKCSRLVLALALILVLESSVQGYPTRRARYQWVRCNPDSNSANCLEEKGPMFELLPGESNKIPRLRTDLFPKTRIQDLNRIFPLSEDYSGSGFGSGSGSGSGSGSGFLTEMEQDYQLVDESDAFHDNLRSLDRNLPSDSQDLGQHGLEEDFML.

An N-terminal signal peptide occupies residues 1–27 (MMQKLLKCSRLVLALALILVLESSVQG). A disulfide bond links Cys40 and Cys49. Residues Ser94 and Ser96 are each glycosylated (O-linked (Xyl...) (glycosaminoglycan) serine). A run of 9 repeats spans residues 94–95 (SG), 96–97 (SG), 98–99 (FG), 100–101 (SG), 102–103 (SG), 104–105 (SG), 106–107 (SG), 108–109 (SG), and 110–111 (SG). A 9 X 2 AA tandem repeats of [SF]-G region spans residues 94-111 (SGSGFGSGSGSGSGSGSG). O-linked (Xyl...) (glycosaminoglycan) serine glycosylation is found at Ser100, Ser102, Ser104, Ser106, Ser108, and Ser110. The segment at 134–158 (RSLDRNLPSDSQDLGQHGLEEDFML) is disordered.

Belongs to the serglycin family. As to quaternary structure, binds to activated CD44 and to GZMB. O-glycosylated; contains chondroitin sulfate and heparan sulfate.

The protein localises to the cytoplasmic granule. Its subcellular location is the cytolytic granule. It is found in the secreted. The protein resides in the extracellular space. It localises to the golgi apparatus. Plays a role in formation of mast cell secretory granules and mediates storage of various compounds in secretory vesicles. Required for storage of some proteases in both connective tissue and mucosal mast cells and for storage of granzyme B in T-lymphocytes. Plays a role in localizing neutrophil elastase in azurophil granules of neutrophils. Mediates processing of MMP2. Plays a role in cytotoxic cell granule-mediated apoptosis by forming a complex with granzyme B which is delivered to cells by perforin to induce apoptosis. Regulates the secretion of TNF-alpha and may also regulate protease secretion. Inhibits bone mineralization. This Homo sapiens (Human) protein is Serglycin (SRGN).